A 448-amino-acid polypeptide reads, in one-letter code: Probable alpha-galactosidase B (448 aa).

Residues 1 to 23 form the signal peptide; the sequence is MSRFHLPLAAAVVLVSCLWSANA. Intrachain disulfides connect Cys46–Cys78 and Cys128–Cys158. Residue Asp156 is the Nucleophile of the active site. Residues Asn163 and Asn181 are each glycosylated (N-linked (GlcNAc...) asparagine). 226 to 230 lines the substrate pocket; the sequence is EWGQA. A glycan (N-linked (GlcNAc...) asparagine) is linked at Asn237. Asp248 (proton donor) is an active-site residue.

It belongs to the glycosyl hydrolase 27 family.

It is found in the secreted. It carries out the reaction Hydrolysis of terminal, non-reducing alpha-D-galactose residues in alpha-D-galactosides, including galactose oligosaccharides, galactomannans and galactolipids.. Hydrolyzes a variety of simple alpha-D-galactoside as well as more complex molecules such as oligosaccharides and polysaccharides. This Aspergillus clavatus (strain ATCC 1007 / CBS 513.65 / DSM 816 / NCTC 3887 / NRRL 1 / QM 1276 / 107) protein is Probable alpha-galactosidase B (aglB).